The primary structure comprises 586 residues: Dual specificity tyrosine-phosphorylation-regulated kinase 3 (586 aa).

Residues 1–13 (MGGAARERGRKDA) show a composition bias toward basic and acidic residues. Residues 1–187 (MGGAARERGR…QGVIGGPNNG (187 aa)) form a disordered region. One can recognise a Protein kinase domain in the interval 208–521 (YEVLKIIGKG…PAQALRHPWI (314 aa)). ATP contacts are provided by residues 214-222 (IGKGSFGQV), lysine 237, and 287-290 (FELL). Aspartate 334 functions as the Proton acceptor in the catalytic mechanism. Tyrosine 368 is modified (phosphotyrosine). A Nuclear localization signal motif is present at residues 467–480 (RSRRGKKRGPPGSK).

This sequence belongs to the protein kinase superfamily. CMGC Ser/Thr protein kinase family. MNB/DYRK subfamily. In terms of assembly, interacts with SIRT1. The cofactor is Mg(2+). Post-translationally, protein kinase activity is activated following autophosphorylation at Tyr-368. Ubiquitinated at anaphase by the anaphase-promoting complex (APC/C), leading to its degradation by the proteasome. Expressed predominantly in testis. Expressed in late pachytene spermatocytes.

It is found in the nucleus. The protein resides in the cytoplasm. Its subcellular location is the nucleus speckle. It localises to the cytoplasmic granule. The protein localises to the cytoskeleton. It is found in the microtubule organizing center. The protein resides in the centrosome. The enzyme catalyses L-seryl-[protein] + ATP = O-phospho-L-seryl-[protein] + ADP + H(+). It catalyses the reaction L-threonyl-[protein] + ATP = O-phospho-L-threonyl-[protein] + ADP + H(+). It carries out the reaction L-tyrosyl-[protein] + ATP = O-phospho-L-tyrosyl-[protein] + ADP + H(+). Its activity is regulated as follows. Protein kinase activity is activated following autophosphorylation at Tyr-368. Its function is as follows. Dual-specificity protein kinase that promotes disassembly of several types of membraneless organelles during mitosis, such as stress granules, nuclear speckles and pericentriolar material. Dual-specificity tyrosine-regulated kinases (DYRKs) autophosphorylate a critical tyrosine residue in their activation loop and phosphorylate their substrate on serine and threonine residues. Acts as a central dissolvase of membraneless organelles during the G2-to-M transition, after the nuclear-envelope breakdown: acts by mediating phosphorylation of multiple serine and threonine residues in unstructured domains of proteins, such as SRRM1 and PCM1. Does not mediate disassembly of all membraneless organelles: disassembly of P-body and nucleolus is not regulated by DYRK3. Dissolution of membraneless organelles at the onset of mitosis is also required to release mitotic regulators, such as ZNF207, from liquid-unmixed organelles where they are sequestered and keep them dissolved during mitosis. Regulates mTORC1 by mediating the dissolution of stress granules: during stressful conditions, DYRK3 partitions from the cytosol to the stress granule, together with mTORC1 components, which prevents mTORC1 signaling. When stress signals are gone, the kinase activity of DYRK3 is required for the dissolution of stress granule and mTORC1 relocation to the cytosol: acts by mediating the phosphorylation of the mTORC1 inhibitor AKT1S1, allowing full reactivation of mTORC1 signaling. Also acts as a negative regulator of EPO-dependent erythropoiesis: may place an upper limit on red cell production during stress erythropoiesis. Inhibits cell death due to cytokine withdrawal in hematopoietic progenitor cells. Promotes cell survival upon genotoxic stress through phosphorylation of SIRT1: this in turn inhibits p53/TP53 activity and apoptosis. The protein is Dual specificity tyrosine-phosphorylation-regulated kinase 3 of Rattus norvegicus (Rat).